The chain runs to 597 residues: Aspartate--tRNA(Asp/Asn) ligase (597 aa).

Glu170 contributes to the L-aspartate binding site. The segment at 194-197 (QLFK) is aspartate. Arg216 contacts L-aspartate. Residues 216-218 (RDE) and Gln225 contribute to the ATP site. His448 serves as a coordination point for L-aspartate. Position 482 (Glu482) interacts with ATP. Position 489 (Arg489) interacts with L-aspartate. 534 to 537 (GWDR) provides a ligand contact to ATP. The interval 558-597 (GGGVDPLTDAPAPITAAQRKESGIDAKPEKAEKAGKPADA) is disordered. The span at 575 to 597 (QRKESGIDAKPEKAEKAGKPADA) shows a compositional bias: basic and acidic residues.

The protein belongs to the class-II aminoacyl-tRNA synthetase family. Type 1 subfamily. As to quaternary structure, homodimer.

It localises to the cytoplasm. The enzyme catalyses tRNA(Asx) + L-aspartate + ATP = L-aspartyl-tRNA(Asx) + AMP + diphosphate. Functionally, aspartyl-tRNA synthetase with relaxed tRNA specificity since it is able to aspartylate not only its cognate tRNA(Asp) but also tRNA(Asn). Reaction proceeds in two steps: L-aspartate is first activated by ATP to form Asp-AMP and then transferred to the acceptor end of tRNA(Asp/Asn). The polypeptide is Aspartate--tRNA(Asp/Asn) ligase (Mycobacteroides abscessus (strain ATCC 19977 / DSM 44196 / CCUG 20993 / CIP 104536 / JCM 13569 / NCTC 13031 / TMC 1543 / L948) (Mycobacterium abscessus)).